The chain runs to 197 residues: Nucleoside triphosphate pyrophosphatase (197 aa).

Aspartate 71 functions as the Proton acceptor in the catalytic mechanism.

Belongs to the Maf family. It depends on a divalent metal cation as a cofactor.

It localises to the cytoplasm. It catalyses the reaction a ribonucleoside 5'-triphosphate + H2O = a ribonucleoside 5'-phosphate + diphosphate + H(+). It carries out the reaction a 2'-deoxyribonucleoside 5'-triphosphate + H2O = a 2'-deoxyribonucleoside 5'-phosphate + diphosphate + H(+). Its function is as follows. Nucleoside triphosphate pyrophosphatase. May have a dual role in cell division arrest and in preventing the incorporation of modified nucleotides into cellular nucleic acids. This is Nucleoside triphosphate pyrophosphatase from Synechococcus sp. (strain JA-2-3B'a(2-13)) (Cyanobacteria bacterium Yellowstone B-Prime).